Reading from the N-terminus, the 667-residue chain is DNA ligase (667 aa).

NAD(+) is bound by residues 32 to 36, 81 to 82, and E110; these read DSEYD and SL. Catalysis depends on K112, which acts as the N6-AMP-lysine intermediate. NAD(+) is bound by residues R133, E167, K283, and K307. 4 residues coordinate Zn(2+): C401, C404, C419, and C424. A BRCT domain is found at 586–667; it reads EGHPEFSGKT…FVDKQNELNS (82 aa).

The protein belongs to the NAD-dependent DNA ligase family. LigA subfamily. Mg(2+) is required as a cofactor. The cofactor is Mn(2+).

It catalyses the reaction NAD(+) + (deoxyribonucleotide)n-3'-hydroxyl + 5'-phospho-(deoxyribonucleotide)m = (deoxyribonucleotide)n+m + AMP + beta-nicotinamide D-nucleotide.. In terms of biological role, DNA ligase that catalyzes the formation of phosphodiester linkages between 5'-phosphoryl and 3'-hydroxyl groups in double-stranded DNA using NAD as a coenzyme and as the energy source for the reaction. It is essential for DNA replication and repair of damaged DNA. The protein is DNA ligase of Staphylococcus aureus (strain COL).